The chain runs to 283 residues: (+)-O-methylkolavelool synthase (283 aa).

Residues Gln-106, 129 to 130, and His-151 each bind S-adenosyl-L-methionine; that span reads NA.

Belongs to the methyltransferase superfamily.

It catalyses the reaction (+)-kolavelool + S-adenosyl-L-methionine = (+)-O-methylkolavelool + S-adenosyl-L-homocysteine + H(+). In terms of biological role, involved in the biosynthesis of the diterpene (+)-O-methylkolavelool. Catalyzes the transfer of a methyl group from S-adenosyl-L-methionine to the hydroxy group of (+)-kolavelool, forming (+)-O-methylkolavelool. The chain is (+)-O-methylkolavelool synthase from Herpetosiphon aurantiacus (strain ATCC 23779 / DSM 785 / 114-95).